The primary structure comprises 279 residues: MKSVTSLGVFGNPIAHSLSPRIHALFAQTRQDSINYQRYLSTPGHFPRRVAEFFRHGGQGANVTLPFKQQAASLVTKLSDRARLAGAVNTLIPYGNGLLLGDNTDGEGLIIDLKNKGLNVSERSLAVFGAGGSARGIIPLLLEQKPRCLYLVNRTAKKAEMLKSQLETLGLVAANRIQVRSSASEIDEPIDLLINATSSSLNGQRLTLPPLLSENASGYDLMYADQPTVFMEQLTQAGCKNVSDGFGMLIEQAASSYQLWMGDERPDTAFVMAEMRTPS.

Shikimate is bound by residues 17-19 (SLS) and threonine 64. Residue lysine 68 is the Proton acceptor of the active site. Aspartate 80 serves as a coordination point for NADP(+). Asparagine 89 and aspartate 105 together coordinate shikimate. Residues 129-133 (GAGGS), 153-158 (NRTAKK), and leucine 221 each bind NADP(+). Tyrosine 223 contributes to the shikimate binding site. Glycine 245 contributes to the NADP(+) binding site.

It belongs to the shikimate dehydrogenase family. As to quaternary structure, homodimer.

It carries out the reaction shikimate + NADP(+) = 3-dehydroshikimate + NADPH + H(+). It functions in the pathway metabolic intermediate biosynthesis; chorismate biosynthesis; chorismate from D-erythrose 4-phosphate and phosphoenolpyruvate: step 4/7. Its function is as follows. Involved in the biosynthesis of the chorismate, which leads to the biosynthesis of aromatic amino acids. Catalyzes the reversible NADPH linked reduction of 3-dehydroshikimate (DHSA) to yield shikimate (SA). The chain is Shikimate dehydrogenase (NADP(+)) from Idiomarina loihiensis (strain ATCC BAA-735 / DSM 15497 / L2-TR).